Consider the following 90-residue polypeptide: ATP-dependent Clp protease adapter protein ClpS (90 aa).

The protein belongs to the ClpS family. Binds to the N-terminal domain of the chaperone ClpA.

Functionally, involved in the modulation of the specificity of the ClpAP-mediated ATP-dependent protein degradation. This Helicobacter pylori (strain J99 / ATCC 700824) (Campylobacter pylori J99) protein is ATP-dependent Clp protease adapter protein ClpS.